Consider the following 270-residue polypeptide: ES1 protein, mitochondrial (270 aa).

Expressed specifically in the inner segments of cone photoreceptor cells of the retina (at protein level).

Its subcellular location is the mitochondrion. Plays a role in promoting mitochondrial enlargement in cone photoreceptor cells in a fusion-independent and ATP-dependent manner. The sequence is that of ES1 protein, mitochondrial from Danio rerio (Zebrafish).